We begin with the raw amino-acid sequence, 423 residues long: 5-hydroxytryptamine receptor 1A (423 aa).

At 1–38 (MEGLSPRQGNNTTSSEGPFGTLGNATGISDVTFSYQVI) the chain is on the extracellular side. 3 N-linked (GlcNAc...) asparagine glycosylation sites follow: Asn10, Asn11, and Asn24. A helical membrane pass occupies residues 39-59 (TSLLLGTLIFCAVLGNACVVA). At 60–73 (AIALERSLQNVANY) the chain is on the cytoplasmic side. A helical membrane pass occupies residues 74-98 (LIGSLAVTDLMVSVLVLPMAALYQV). Topologically, residues 99-107 (LNKWTLGQV) are extracellular. Residues 108-132 (TCDLFIALDVLCCTSSILHLCAIAL) traverse the membrane as a helical segment. Cysteines 109 and 187 form a disulfide. Serotonin is bound by residues Asp116 and Cys120. Positions 133–135 (DRY) match the DRY motif; important for ligand-induced conformation changes motif. The Cytoplasmic segment spans residues 133-152 (DRYWAITDPIDYVNKRTPRR). A helical membrane pass occupies residues 153–174 (AAALISLTWLIGFLISIPPMLG). The Extracellular portion of the chain corresponds to 175 to 193 (WRTPEDRSDPDACTISKDH). Residues 194–216 (GYTIYSTFGAFYIPLLLMLVLYG) form a helical membrane-spanning segment. The Cytoplasmic segment spans residues 217-346 (RIFRAARFRI…LARERKTVKT (130 aa)). The interval 235–277 (RKGADARSGVSPAPQPRKSVNGEPGGREWRQGPGSQAGGPLCT) is disordered. Lys345, Thr346, and Gly352 together coordinate 1D-myo-inositol 4-phosphate. A helical membrane pass occupies residues 347–370 (LGIIMGTFILCWLPFFIVALVLPF). Residues 371–378 (CESSCHMP) are Extracellular-facing. A helical transmembrane segment spans residues 379–403 (TLLGAIINWLGYSNSLLNPVIYAYF). The short motif at 396 to 400 (NPVIY) is the NPxxY motif; important for ligand-induced conformation changes and signaling element. The 1D-myo-inositol 4-phosphate site is built by Phe403, Asn404, and Lys405. The Cytoplasmic portion of the chain corresponds to 404-423 (NKDFQNAFKKIVRCKFCRRR).

The protein belongs to the G-protein coupled receptor 1 family. 5-hydroxytryptamine receptor subfamily. HTR1A sub-subfamily. As to quaternary structure, heterodimer; heterodimerizes with GPER1. Interacts with YIF1B. Interacts with GPR39 and GALR1.

It localises to the cell membrane. The protein localises to the cell projection. The protein resides in the dendrite. With respect to regulation, G-protein coupled receptor activity is regulated by lipids: phosphatidylinositol 4-phosphate increases HTR1A-mediated activity. In terms of biological role, G-protein coupled receptor for 5-hydroxytryptamine (serotonin). Also functions as a receptor for various drugs and psychoactive substances. Ligand binding causes a conformation change that triggers signaling via guanine nucleotide-binding proteins (G proteins) and modulates the activity of downstream effectors, such as adenylate cyclase. HTR1A is coupled to G(i)/G(o) G alpha proteins and mediates inhibitory neurotransmission: signaling inhibits adenylate cyclase activity and activates a phosphatidylinositol-calcium second messenger system that regulates the release of Ca(2+) ions from intracellular stores. Beta-arrestin family members regulate signaling by mediating both receptor desensitization and resensitization processes. This chain is 5-hydroxytryptamine receptor 1A (HTR1A), found in Canis lupus familiaris (Dog).